Here is a 1241-residue protein sequence, read N- to C-terminus: ATP-dependent helicase/nuclease subunit A (1241 aa).

The UvrD-like helicase ATP-binding domain maps to 12-485; sequence SQWTDDQWKA…IDLAKNFRSR (474 aa). ATP is bound at residue 33–40; that stretch reads AAAGSGKT. Residues 505–805 enclose the UvrD-like helicase C-terminal domain; it reads GEIDYDADAE…RIMTIHKSKG (301 aa).

This sequence belongs to the helicase family. AddA subfamily. In terms of assembly, heterodimer of AddA and AddB/RexB. The cofactor is Mg(2+).

It carries out the reaction Couples ATP hydrolysis with the unwinding of duplex DNA by translocating in the 3'-5' direction.. The enzyme catalyses ATP + H2O = ADP + phosphate + H(+). Its function is as follows. The heterodimer acts as both an ATP-dependent DNA helicase and an ATP-dependent, dual-direction single-stranded exonuclease. Recognizes the chi site generating a DNA molecule suitable for the initiation of homologous recombination. The AddA nuclease domain is required for chi fragment generation; this subunit has the helicase and 3' -&gt; 5' nuclease activities. The polypeptide is ATP-dependent helicase/nuclease subunit A (Bacillus cereus (strain B4264)).